Consider the following 135-residue polypeptide: Hydroxylaminobenzene mutase HabA (135 aa).

4 helical membrane-spanning segments follow: residues leucine 5–valine 25, valine 33–tyrosine 55, phenylalanine 67–tryptophan 87, and phenylalanine 113–isoleucine 133.

The protein resides in the cell membrane. It catalyses the reaction N-phenylhydroxylamine = 2-aminophenol. In terms of biological role, catalyzes the rearrangement of hydroxylaminobenzene to 2-aminophenol. Involved in the degradation of nitrobenzene. In Ectopseudomonas oleovorans (Pseudomonas oleovorans), this protein is Hydroxylaminobenzene mutase HabA (habA).